Consider the following 319-residue polypeptide: Sphingomyelinase D (319 aa).

The first 23 residues, 1 to 23 (MTPLLRTICAILCILIAVPLTFA), serve as a signal peptide directing secretion. Residue His-44 is part of the active site. Glu-64, Asp-66, and Asp-109 together coordinate Mg(2+). The short motif at 312–319 (ATGADKPW) is the SMD-tail element.

It belongs to the sphingomyelinase D/phospholipase D family. It depends on Mg(2+) as a cofactor.

It localises to the secreted. The catalysed reaction is a sphingomyelin + H2O = an N-acylsphing-4-enine 1-phosphate + choline + H(+). Catalyzes the hydrolysis of sphingomyelin. Sphingomyelinases D are produced by some spider in their venoms, but also by arthropods such as ticks, or pathogenic bacteria and fungi. They might play a role in pathogenicity through different mechanisms, such as membrane destabilization and host cell penetration, but also pulmonary inflammation and cutaneous lesions. The protein is Sphingomyelinase D of Ajellomyces capsulatus (strain G186AR / H82 / ATCC MYA-2454 / RMSCC 2432) (Darling's disease fungus).